The chain runs to 463 residues: Asparagine--tRNA ligase (463 aa).

Belongs to the class-II aminoacyl-tRNA synthetase family. As to quaternary structure, homodimer.

Its subcellular location is the cytoplasm. The enzyme catalyses tRNA(Asn) + L-asparagine + ATP = L-asparaginyl-tRNA(Asn) + AMP + diphosphate + H(+). The protein is Asparagine--tRNA ligase of Clostridium novyi (strain NT).